The primary structure comprises 137 residues: Kunitz-type trypsin inhibitor alpha chain (137 aa).

A disulfide bridge links cysteine 40 with cysteine 86.

Belongs to the protease inhibitor I3 (leguminous Kunitz-type inhibitor) family. In terms of assembly, heterodimer of an alpha and a beta chain linked by a disulfide bond.

Its function is as follows. Inhibition of trypsin. The protein is Kunitz-type trypsin inhibitor alpha chain of Neltuma juliflora (Mesquite).